The sequence spans 298 residues: MLARSARLLHSAELAANAIRAASGAPATAAAAEASFPSTDDVAAKTKKTGNRIKTFEIYRFNPEAPGAKPTVQKFDVDLDQCGTMILDALIKIKNEVDPTLTFRRSCREGICGSCAMNIGGQNTLACICKIDSDTSKSTKIYPLPHMFVVKDLVPDMNLFYAQYASIQPWIQKKTPLTLGEKQMHQSVAERDRLDGLYECILCACCSTSCPSYWWNADKYLGPAVLMQAYRWVIDSRDDYATERLHRMHDSFSAFKCHTIMNCTKTCPKHLNPAKAIGEIKSLLTGFTSKPAAEPSAF.

The 2Fe-2S ferredoxin-type domain occupies 59–147; the sequence is YRFNPEAPGA…STKIYPLPHM (89 aa). [2Fe-2S] cluster is bound by residues Cys-107, Cys-112, Cys-115, and Cys-127. Positions 190-220 constitute a 4Fe-4S ferredoxin-type domain; it reads ERDRLDGLYECILCACCSTSCPSYWWNADKY. Positions 200, 203, and 206 each coordinate [4Fe-4S] cluster. Cys-210 contacts [3Fe-4S] cluster. Residue Trp-215 participates in a ubiquinone binding. [3Fe-4S] cluster-binding residues include Cys-257 and Cys-263. Cys-267 provides a ligand contact to [4Fe-4S] cluster.

This sequence belongs to the succinate dehydrogenase/fumarate reductase iron-sulfur protein family. As to quaternary structure, component of complex II composed of four subunits: a flavoprotein (FP), an iron-sulfur protein (IP), and a cytochrome b composed of a large and a small subunit. [2Fe-2S] cluster is required as a cofactor. The cofactor is [3Fe-4S] cluster. Requires [4Fe-4S] cluster as cofactor.

It localises to the mitochondrion inner membrane. The enzyme catalyses a quinone + succinate = fumarate + a quinol. Its pathway is carbohydrate metabolism; tricarboxylic acid cycle; fumarate from succinate (eukaryal route): step 1/1. Functionally, iron-sulfur protein (IP) subunit of succinate dehydrogenase (SDH) that is involved in complex II of the mitochondrial electron transport chain and is responsible for transferring electrons from succinate to ubiquinone (coenzyme Q). The polypeptide is Succinate dehydrogenase [ubiquinone] iron-sulfur subunit, mitochondrial (sdhb-1) (Caenorhabditis elegans).